Here is a 309-residue protein sequence, read N- to C-terminus: ESX-3 secretion system protein EccE3 (309 aa).

2 helical membrane-spanning segments follow: residues 5 to 25 (IALA…QTTT) and 29 to 49 (VLGV…GMFL).

This sequence belongs to the EccE family. As to quaternary structure, part of the ESX-3 / type VII secretion system (T7SS), which is composed of cytosolic and membrane components. The ESX-3 membrane complex is composed of EccB3, EccC3, EccD3 and EccE3.

It is found in the cell inner membrane. Its function is as follows. Part of the ESX-3 specialized secretion system, which is required for siderophore-mediated iron acquisition and for the secretion of EsxH and EsxG. This Mycolicibacterium smegmatis (strain ATCC 700084 / mc(2)155) (Mycobacterium smegmatis) protein is ESX-3 secretion system protein EccE3.